A 713-amino-acid polypeptide reads, in one-letter code: Mitochondrial intermediate peptidase (713 aa).

Residues 1–35 constitute a mitochondrion transit peptide; it reads MLCVGRLGGLGARAAALPPRRAGRGSLEAGIRARR. Position 126 is an N6-acetyllysine (Lys126). Position 495 (His495) interacts with Zn(2+). Glu496 is a catalytic residue. 2 residues coordinate Zn(2+): His499 and His502.

The protein belongs to the peptidase M3 family. In terms of assembly, monomer. Zn(2+) serves as cofactor.

The protein localises to the mitochondrion matrix. The enzyme catalyses Release of an N-terminal octapeptide as second stage of processing of some proteins imported into the mitochondrion.. With respect to regulation, activity is divalent cation-dependent. It is stimulated by manganese, magnesium or calcium ions and reversibly inhibited by zinc, cobalt and iron. Its function is as follows. Cleaves proteins, imported into the mitochondrion, to their mature size. In Homo sapiens (Human), this protein is Mitochondrial intermediate peptidase (MIPEP).